A 412-amino-acid chain; its full sequence is Chorismate synthase (412 aa).

NADP(+) contacts are provided by Arg-40 and Arg-46. FMN-binding positions include 134–136, 255–256, Gly-299, 314–318, and Arg-340; these read RAS, QA, and KPIAT.

The protein belongs to the chorismate synthase family. Homotetramer. FMNH2 is required as a cofactor.

It carries out the reaction 5-O-(1-carboxyvinyl)-3-phosphoshikimate = chorismate + phosphate. The protein operates within metabolic intermediate biosynthesis; chorismate biosynthesis; chorismate from D-erythrose 4-phosphate and phosphoenolpyruvate: step 7/7. Functionally, catalyzes the anti-1,4-elimination of the C-3 phosphate and the C-6 proR hydrogen from 5-enolpyruvylshikimate-3-phosphate (EPSP) to yield chorismate, which is the branch point compound that serves as the starting substrate for the three terminal pathways of aromatic amino acid biosynthesis. This reaction introduces a second double bond into the aromatic ring system. The polypeptide is Chorismate synthase (Clavibacter michiganensis subsp. michiganensis (strain NCPPB 382)).